Consider the following 284-residue polypeptide: Bifunctional protein FolD (284 aa).

NADP(+) is bound by residues 165-167 and serine 190; that span reads GRS.

The protein belongs to the tetrahydrofolate dehydrogenase/cyclohydrolase family. In terms of assembly, homodimer.

It carries out the reaction (6R)-5,10-methylene-5,6,7,8-tetrahydrofolate + NADP(+) = (6R)-5,10-methenyltetrahydrofolate + NADPH. The catalysed reaction is (6R)-5,10-methenyltetrahydrofolate + H2O = (6R)-10-formyltetrahydrofolate + H(+). It participates in one-carbon metabolism; tetrahydrofolate interconversion. Catalyzes the oxidation of 5,10-methylenetetrahydrofolate to 5,10-methenyltetrahydrofolate and then the hydrolysis of 5,10-methenyltetrahydrofolate to 10-formyltetrahydrofolate. This chain is Bifunctional protein FolD, found in Streptococcus uberis (strain ATCC BAA-854 / 0140J).